The chain runs to 459 residues: Carbonic anhydrase 9 (459 aa).

Residues 1-37 (MAPLCPSPWLPLLIPAPAPGLTVQLLLSLLLLVPVHP) form the signal peptide. The tract at residues 38-112 (QRLPRMQEDS…EEEGSLKLED (75 aa)) is proteoglycan-like (PG). The Extracellular portion of the chain corresponds to 38-414 (QRLPRMQEDS…QLNSCLAAGD (377 aa)). The interval 42–154 (RMQEDSPLGG…GDPPWPRVSP (113 aa)) is disordered. The segment covering 55–95 (GEDDPLGEEDLPSEEDSPREEDPPGEEDLPGEEDLPGEEDL) has biased composition (acidic residues). Residues 96-112 (PEVKPKSEEEGSLKLED) are compositionally biased toward basic and acidic residues. Residue Thr-115 is glycosylated (O-linked (GlcNAc...) threonine). Over residues 129–140 (AHRDKEGDDQSH) the composition is skewed to basic and acidic residues. Residues 138–391 (QSHWRYGGDP…NGRVIEASFP (254 aa)) form a catalytic region. An Alpha-carbonic anhydrase domain is found at 139–390 (SHWRYGGDPP…LNGRVIEASF (252 aa)). A disulfide bond links Cys-156 and Cys-336. The Proton donor/acceptor role is filled by His-200. Positions 226, 228, and 251 each coordinate Zn(2+). 332–333 (TT) contributes to the substrate binding site. An N-linked (GlcNAc...) asparagine glycan is attached at Asn-346. Residues 415 to 435 (ILALVFGLLFAVTSVAFLVQM) traverse the membrane as a helical segment. Residues 436–459 (RRQHRRGTKGGVSYRPAEVAETGA) are Cytoplasmic-facing. Phosphotyrosine is present on Tyr-449.

It belongs to the alpha-carbonic anhydrase family. In terms of assembly, forms oligomers linked by disulfide bonds. It depends on Zn(2+) as a cofactor. Post-translationally, asn-346 bears high-mannose type glycan structures. Expressed primarily in carcinoma cells lines. Expression is restricted to very few normal tissues and the most abundant expression is found in the epithelial cells of gastric mucosa.

It is found in the nucleus. The protein resides in the nucleolus. Its subcellular location is the cell membrane. It localises to the cell projection. The protein localises to the microvillus membrane. It catalyses the reaction hydrogencarbonate + H(+) = CO2 + H2O. Inhibited by coumarins, saccharin, sulfonamide derivatives such as acetazolamide (AZA) and Foscarnet (phosphonoformate trisodium salt). In terms of biological role, catalyzes the interconversion between carbon dioxide and water and the dissociated ions of carbonic acid (i.e. bicarbonate and hydrogen ions). This is Carbonic anhydrase 9 (CA9) from Homo sapiens (Human).